The sequence spans 239 residues: Lectin (239 aa).

2 N-linked (GlcNAc...) asparagine glycosylation sites follow: Asn-17 and Asn-113.

This sequence belongs to the leguminous lectin family. As to quaternary structure, homodimer.

Galactose and N-acetyllactosamine specific lectin. This chain is Lectin, found in Erythrina crista-galli (Cockspur coral tree).